A 112-amino-acid polypeptide reads, in one-letter code: Thioredoxin-like protein YdfQ (112 aa).

A Thioredoxin domain is found at 1–107 (MKEMTGLHSL…LEQKLKRVYR (107 aa)). A disulfide bond links C32 and C35.

The protein is Thioredoxin-like protein YdfQ (ydfQ) of Bacillus subtilis (strain 168).